Consider the following 140-residue polypeptide: Phospholipase A2 (140 aa).

The signal sequence occupies residues 1–21 (MNPAHLLVLAAVCISLSGASS). Positions 22 to 27 (IAPQPL) are excised as a propeptide. Cystine bridges form between Cys38–Cys97, Cys52–Cys139, Cys54–Cys70, Cys69–Cys125, Cys76–Cys118, Cys86–Cys111, and Cys104–Cys116. Asn39 carries N-linked (GlcNAc...) asparagine glycosylation. Ca(2+)-binding residues include Tyr53, Gly55, and Gly57. The active site involves His73. Position 74 (Asp74) interacts with Ca(2+). Asn107 is a glycosylation site (N-linked (GlcNAc...) asparagine). Asp119 is a catalytic residue.

It belongs to the phospholipase A2 family. Group I subfamily. D49 sub-subfamily. Ca(2+) is required as a cofactor. In terms of tissue distribution, expressed by the venom gland.

The protein localises to the secreted. It carries out the reaction a 1,2-diacyl-sn-glycero-3-phosphocholine + H2O = a 1-acyl-sn-glycero-3-phosphocholine + a fatty acid + H(+). In terms of biological role, PLA2 catalyzes the calcium-dependent hydrolysis of the 2-acyl groups in 3-sn-phosphoglycerides. This chain is Phospholipase A2, found in Micrurus altirostris (Uruguayan coral snake).